A 231-amino-acid polypeptide reads, in one-letter code: 5'-methylthioadenosine/S-adenosylhomocysteine nucleosidase (231 aa).

Glu12 (proton acceptor) is an active-site residue. Residues Gly78, Met153, and 174–175 each bind substrate; that span reads ME. The active-site Proton donor is Asp198.

It belongs to the PNP/UDP phosphorylase family. MtnN subfamily.

The catalysed reaction is S-adenosyl-L-homocysteine + H2O = S-(5-deoxy-D-ribos-5-yl)-L-homocysteine + adenine. It carries out the reaction S-methyl-5'-thioadenosine + H2O = 5-(methylsulfanyl)-D-ribose + adenine. The enzyme catalyses 5'-deoxyadenosine + H2O = 5-deoxy-D-ribose + adenine. It functions in the pathway amino-acid biosynthesis; L-methionine biosynthesis via salvage pathway; S-methyl-5-thio-alpha-D-ribose 1-phosphate from S-methyl-5'-thioadenosine (hydrolase route): step 1/2. Catalyzes the irreversible cleavage of the glycosidic bond in both 5'-methylthioadenosine (MTA) and S-adenosylhomocysteine (SAH/AdoHcy) to adenine and the corresponding thioribose, 5'-methylthioribose and S-ribosylhomocysteine, respectively. Also cleaves 5'-deoxyadenosine, a toxic by-product of radical S-adenosylmethionine (SAM) enzymes, into 5-deoxyribose and adenine. In Bacillus licheniformis (strain ATCC 14580 / DSM 13 / JCM 2505 / CCUG 7422 / NBRC 12200 / NCIMB 9375 / NCTC 10341 / NRRL NRS-1264 / Gibson 46), this protein is 5'-methylthioadenosine/S-adenosylhomocysteine nucleosidase.